Reading from the N-terminus, the 185-residue chain is MINEIKKDAQERMDKSVEALKSQINKVRTGRASPNLLDGIVVEYYGAPTPLNQVANVVAEDGRTLAITVFDRTLAPAVEKAIMASDLGLNPSSAGAIIRVPLPPLTEERRKDLIKVVRGDAEQGRVSIRNIRRDANDKIKALLKDKEISEDDERRSQDEIQKLTDMFIKKIDEALTLKEAELMEF.

The protein belongs to the RRF family.

The protein localises to the cytoplasm. In terms of biological role, responsible for the release of ribosomes from messenger RNA at the termination of protein biosynthesis. May increase the efficiency of translation by recycling ribosomes from one round of translation to another. This chain is Ribosome-recycling factor, found in Proteus mirabilis (strain HI4320).